The primary structure comprises 403 residues: Histidine decarboxylase (403 aa).

Position 120 (His-120) interacts with substrate. Lys-233 is modified (N6-(pyridoxal phosphate)lysine).

It belongs to the group II decarboxylase family. As to quaternary structure, homotetramer. Requires pyridoxal 5'-phosphate as cofactor.

It catalyses the reaction L-histidine + H(+) = histamine + CO2. This chain is Histidine decarboxylase, found in Pseudomonas entomophila (strain L48).